Reading from the N-terminus, the 84-residue chain is Protein myomixer (84 aa).

Residues 1–4 (MPTP) are Cytoplasmic-facing. The helical transmembrane segment at 5–25 (LLPLLLRLLLSCLLLPAARLA) threads the bilayer. Topologically, residues 26–84 (RQYLLPLLRRLARRLGSQDMREALLGCLLFILSQRHSPDAGEASRVDRLERRERLGPQK) are extracellular. The AxLyCxL signature appears at 48 to 57 (ALLGCLLFIL). The interval 62–84 (SPDAGEASRVDRLERRERLGPQK) is disordered.

It belongs to the MYMX family. Interacts with MYMK.

The protein localises to the cell membrane. Its function is as follows. Myoblast-specific protein that mediates myoblast fusion, an essential step for the formation of multi-nucleated muscle fibers. Involved in membrane fusion downstream of the lipid mixing step mediated by MYMK. Acts by generating membrane stresses via its extracellular C-terminus, leading to drive fusion pore formation. Acts independently of MYMK. Involved in skeletal muscle regeneration in response to injury by mediating the fusion of satellite cells, a population of muscle stem cells, with injured myofibers. This Homo sapiens (Human) protein is Protein myomixer.